The chain runs to 362 residues: Phosphoserine aminotransferase (362 aa).

Residues Ser-9 and Arg-42 each contribute to the L-glutamate site. Pyridoxal 5'-phosphate contacts are provided by residues 76–77 (GR), Trp-102, Thr-153, Asp-174, and Gln-197. N6-(pyridoxal phosphate)lysine is present on Lys-198. 239 to 240 (NT) is a pyridoxal 5'-phosphate binding site.

The protein belongs to the class-V pyridoxal-phosphate-dependent aminotransferase family. SerC subfamily. Homodimer. It depends on pyridoxal 5'-phosphate as a cofactor.

It localises to the cytoplasm. The catalysed reaction is O-phospho-L-serine + 2-oxoglutarate = 3-phosphooxypyruvate + L-glutamate. It carries out the reaction 4-(phosphooxy)-L-threonine + 2-oxoglutarate = (R)-3-hydroxy-2-oxo-4-phosphooxybutanoate + L-glutamate. It participates in amino-acid biosynthesis; L-serine biosynthesis; L-serine from 3-phospho-D-glycerate: step 2/3. It functions in the pathway cofactor biosynthesis; pyridoxine 5'-phosphate biosynthesis; pyridoxine 5'-phosphate from D-erythrose 4-phosphate: step 3/5. Functionally, catalyzes the reversible conversion of 3-phosphohydroxypyruvate to phosphoserine and of 3-hydroxy-2-oxo-4-phosphonooxybutanoate to phosphohydroxythreonine. This Salmonella newport (strain SL254) protein is Phosphoserine aminotransferase.